The primary structure comprises 159 residues: MNKRKEKGKSHSKRPVRNTPPRWVPFGPEEIKALIVELSKKGYGPSMIGIILRDQFGVPLVKPIVGKKLVKIMEEQGVAPPIPEDLFHLMKRAVRVRAHLAEHPKDKHSARGLMEIESKIRRLVKYYKRVGKLPPDWKYDPERARLLVQQYSALFESGA.

Basic residues predominate over residues 1 to 16 (MNKRKEKGKSHSKRPV). The tract at residues 1-22 (MNKRKEKGKSHSKRPVRNTPPR) is disordered.

The protein belongs to the universal ribosomal protein uS15 family. In terms of assembly, part of the 30S ribosomal subunit.

The chain is Small ribosomal subunit protein uS15 from Ignicoccus hospitalis (strain KIN4/I / DSM 18386 / JCM 14125).